The sequence spans 431 residues: MTTRYRVEYALKTHRRDQFIEWIKALLAVPFVLYSQPHGVLEDPDRSVDTLSQTREEAHRRYSEIFRDIEAMIDDHIAHQNDAENPFPSKLKLLVPSIGPFFTRLPLEAAFKFQDNKRYISSRRFVSPSFNDIRLILNSAQIMAVTTYGTLQLATFDGDVTLYDDGQSLEPTSPVIPRLLDLLRKNVKIGIVTAAGYTTADRYYSRLHGLLDAMANSADLTPSQKQSLVVMGGEANYLFEFDSSSPHLLAPVPRQHWLTPEMAAWNEQDIAQLLDVAEAALRDCIKTLNLPATLMRKDRAVGIIPVSPEIRIPRESLEETVLLVQKILELSTVGRSRRVPFCAFNGGRDVFVDIGDKSWGVTVCQRWFSQKEGPHGVIKGENTLHVGDQFLSAGANDFRARSVGTTAWIASPVETVELLDELAELMGKKMS.

Lysine 117 is a binding site for ATP. Aspartate 157 functions as the Nucleophile in the catalytic mechanism. IMP is bound by residues aspartate 157, aspartate 159, aspartate 165, threonine 193, aspartate 349, and lysine 357. Residues aspartate 157 and aspartate 159 each contribute to the Mg(2+) site. Aspartate 159 serves as the catalytic Proton donor. Residue aspartate 388 coordinates Mg(2+).

This sequence belongs to the ISN1 family. As to quaternary structure, homotetramer. It depends on Mg(2+) as a cofactor.

The enzyme catalyses IMP + H2O = inosine + phosphate. Allosterically activated by ATP. ATP binding is a prerequisite to magnesium and substrate binding. ATP binds to 2 of the subunits in the homotetramer inducing a closure of these 2 subunits and the release of the C-terminal loop, thereby activating the enzyme. In terms of biological role, IMP-specific 5'-nucleotidase involved in IMP (inositol monophosphate) degradation. This Neurospora crassa (strain ATCC 24698 / 74-OR23-1A / CBS 708.71 / DSM 1257 / FGSC 987) protein is IMP-specific 5'-nucleotidase 1 (isn-1).